The chain runs to 338 residues: GTPase Obg (338 aa).

Residues 1–159 (MSFIDEVKIH…RWLRLELKLM (159 aa)) form the Obg domain. The OBG-type G domain occupies 160–331 (ADVGLLGMPS…LLDEIARQLW (172 aa)). GTP-binding positions include 166 to 173 (GMPSVGKS), 191 to 195 (FTTLK), 213 to 216 (DIPG), 283 to 286 (NKMD), and 312 to 314 (SAA). Residues Ser-173 and Thr-193 each coordinate Mg(2+).

Belongs to the TRAFAC class OBG-HflX-like GTPase superfamily. OBG GTPase family. Monomer. The cofactor is Mg(2+).

It localises to the cytoplasm. Functionally, an essential GTPase which binds GTP, GDP and possibly (p)ppGpp with moderate affinity, with high nucleotide exchange rates and a fairly low GTP hydrolysis rate. Plays a role in control of the cell cycle, stress response, ribosome biogenesis and in those bacteria that undergo differentiation, in morphogenesis control. The sequence is that of GTPase Obg from Geotalea daltonii (strain DSM 22248 / JCM 15807 / FRC-32) (Geobacter daltonii).